We begin with the raw amino-acid sequence, 246 residues long: tRNA pseudouridine synthase A (246 aa).

Asp-52 serves as the catalytic Nucleophile. Tyr-111 provides a ligand contact to substrate.

This sequence belongs to the tRNA pseudouridine synthase TruA family. Homodimer.

It catalyses the reaction uridine(38/39/40) in tRNA = pseudouridine(38/39/40) in tRNA. Formation of pseudouridine at positions 38, 39 and 40 in the anticodon stem and loop of transfer RNAs. The sequence is that of tRNA pseudouridine synthase A from Borreliella burgdorferi (strain ATCC 35210 / DSM 4680 / CIP 102532 / B31) (Borrelia burgdorferi).